The sequence spans 1755 residues: Transposon Ty1-DR6 Gag-Pol polyprotein (1755 aa).

Polar residues-rich tracts occupy residues 1-23, 48-60, and 127-152; these read MESQQLSQHSPISHGSACASVTS, TKANSQQTTTPAS, and QSQFPQYPSSVGTPLSTPSPESGNTF. Disordered regions lie at residues 1 to 93, 126 to 174, and 352 to 421; these read MESQ…MMTQ, PQSQ…PPPM, and GSRN…SKST. Low complexity predominate over residues 153 to 165; it reads TDSSSADSDMTST. An RNA-binding region spans residues 299–401; that stretch reads NNGIHINNKV…NSKSKTARAH (103 aa). Over residues 402–418 the composition is skewed to low complexity; it reads NVSTSNNSPSTDNDSIS. Position 416 is a phosphoserine (S416). Catalysis depends on D461, which acts as the For protease activity; shared with dimeric partner. An integrase-type zinc finger-like region spans residues 583-640; that stretch reads NVHTSESTRKYPYPFIHRMLAHANAQTIRYSLKNNTITYFNESDVDWSSAIDYQCPDC. One can recognise an Integrase catalytic domain in the interval 660–835; the sequence is NSYEPFQYLH…AGLDISTLLP (176 aa). 2 residues coordinate Mg(2+): D671 and D736. Disordered regions lie at residues 956–1087, 1092–1111, and 1130–1187; these read SKAV…ETEK, RSPSIDASPPENNSSHNIVP, and DLPL…DNET. The segment covering 960–969 has biased composition (low complexity); it reads SPTDSTPPST. Polar residues predominate over residues 1005–1015; sequence STPQISNIEST. Residues 1038-1053 are compositionally biased toward basic and acidic residues; sequence ESSHASKSKDFRHSDS. Polar residues-rich tracts occupy residues 1054 to 1082 and 1101 to 1111; these read YSENETNHTNVPISSTGGTNNKTVPQISD and PENNSSHNIVP. Positions 1178-1212 match the Bipartite nuclear localization signal motif; sequence KKRSLEDNETEIKVSRDTWNTKNMRSLEPPRSKKR. Positions 1338-1476 constitute a Reverse transcriptase Ty1/copia-type domain; the sequence is NNYYITQLDI…DILGLEIKYQ (139 aa). Mg(2+) contacts are provided by D1346, D1427, D1428, D1610, E1652, and D1685. Residues 1610-1752 form the RNase H Ty1/copia-type domain; sequence DASYGNQPYY…IKTFKLLTNK (143 aa).

The capsid protein forms a homotrimer, from which the VLPs are assembled. The protease is a homodimer, whose active site consists of two apposed aspartic acid residues. In terms of processing, initially, virus-like particles (VLPs) are composed of the structural unprocessed proteins Gag and Gag-Pol, and also contain the host initiator methionine tRNA (tRNA(i)-Met) which serves as a primer for minus-strand DNA synthesis, and a dimer of genomic Ty RNA. Processing of the polyproteins occurs within the particle and proceeds by an ordered pathway, called maturation. First, the protease (PR) is released by autocatalytic cleavage of the Gag-Pol polyprotein yielding capsid protein p45 and a Pol-p154 precursor protein. This cleavage is a prerequisite for subsequent processing of Pol-p154 at the remaining sites to release the mature structural and catalytic proteins. Maturation takes place prior to the RT reaction and is required to produce transposition-competent VLPs.

The protein localises to the cytoplasm. The protein resides in the nucleus. The catalysed reaction is DNA(n) + a 2'-deoxyribonucleoside 5'-triphosphate = DNA(n+1) + diphosphate. It carries out the reaction Endonucleolytic cleavage to 5'-phosphomonoester.. Capsid protein (CA) is the structural component of the virus-like particle (VLP), forming the shell that encapsulates the retrotransposons dimeric RNA genome. The particles are assembled from trimer-clustered units and there are holes in the capsid shells that allow for the diffusion of macromolecules. CA also has nucleocapsid-like chaperone activity, promoting primer tRNA(i)-Met annealing to the multipartite primer-binding site (PBS), dimerization of Ty1 RNA and initiation of reverse transcription. In terms of biological role, the aspartyl protease (PR) mediates the proteolytic cleavages of the Gag and Gag-Pol polyproteins after assembly of the VLP. Its function is as follows. Reverse transcriptase/ribonuclease H (RT) is a multifunctional enzyme that catalyzes the conversion of the retro-elements RNA genome into dsDNA within the VLP. The enzyme displays a DNA polymerase activity that can copy either DNA or RNA templates, and a ribonuclease H (RNase H) activity that cleaves the RNA strand of RNA-DNA heteroduplexes during plus-strand synthesis and hydrolyzes RNA primers. The conversion leads to a linear dsDNA copy of the retrotransposon that includes long terminal repeats (LTRs) at both ends. Functionally, integrase (IN) targets the VLP to the nucleus, where a subparticle preintegration complex (PIC) containing at least integrase and the newly synthesized dsDNA copy of the retrotransposon must transit the nuclear membrane. Once in the nucleus, integrase performs the integration of the dsDNA into the host genome. This chain is Transposon Ty1-DR6 Gag-Pol polyprotein (TY1B-DR6), found in Saccharomyces cerevisiae (strain ATCC 204508 / S288c) (Baker's yeast).